The following is a 479-amino-acid chain: MRTAPTILHLDMDAFFASVEQASKPSLRGKAVVVGGLGPRGVVATCSYEARVFGVHSAMPMGQARRLAPHAAYLVPRFELYRSISEQVMRLLRELSPLVEPLSLDEAFVDLDAGGAARDAETARLAGTKLRTDIRTVTGLTGSVGLAASKMLAKIASEAAKPDGLVLIPPGTERAMLEPMTVRTLPGVGPATGDHLRRAGITTVGEIAEAGEDELVRLLGKAHGHALYAMALARDERPVVAERETKSVSVEDTYDVDIHDRVRVGVEVGRLADRCVRRLRASGLSGRTIVLKVRRYDFSTLTRSETLRGPTDDPAVVREAAARLLDSVDTTGGVRLLGVGVSGLADYTQEDLFAQAAGDRAEEPAEEPGTEPAEAHSPSPAERRWPSGHDVRHTELGHGWVQGSGLGRVTVRFETPYSGVGRVRTFLVDDPELTPADPLPLVADTEGGAGQPSSGPLPLPASLPKSWSGGGGAAATSRP.

The region spanning 7–189 is the UmuC domain; it reads ILHLDMDAFF…MTVRTLPGVG (183 aa). Residues Asp-11 and Asp-105 each coordinate Mg(2+). Glu-106 is an active-site residue. Disordered stretches follow at residues 357–400 and 430–479; these read AGDR…GHGW and DPEL…TSRP. The segment covering 381-396 has biased composition (basic and acidic residues); the sequence is AERRWPSGHDVRHTEL.

Belongs to the DNA polymerase type-Y family. Monomer. It depends on Mg(2+) as a cofactor.

The protein localises to the cytoplasm. It carries out the reaction DNA(n) + a 2'-deoxyribonucleoside 5'-triphosphate = DNA(n+1) + diphosphate. Poorly processive, error-prone DNA polymerase involved in untargeted mutagenesis. Copies undamaged DNA at stalled replication forks, which arise in vivo from mismatched or misaligned primer ends. These misaligned primers can be extended by PolIV. Exhibits no 3'-5' exonuclease (proofreading) activity. May be involved in translesional synthesis, in conjunction with the beta clamp from PolIII. In Streptomyces coelicolor (strain ATCC BAA-471 / A3(2) / M145), this protein is DNA polymerase IV.